The primary structure comprises 682 residues: DNA-directed RNA polymerase subunit beta' (682 aa).

Positions 69, 71, 87, and 90 each coordinate Zn(2+). 3 residues coordinate Mg(2+): Asp491, Asp493, and Asp495.

The protein belongs to the RNA polymerase beta' chain family. RpoC1 subfamily. As to quaternary structure, in plastids the minimal PEP RNA polymerase catalytic core is composed of four subunits: alpha, beta, beta', and beta''. When a (nuclear-encoded) sigma factor is associated with the core the holoenzyme is formed, which can initiate transcription. The cofactor is Mg(2+). Zn(2+) is required as a cofactor.

The protein resides in the plastid. The protein localises to the chloroplast. It carries out the reaction RNA(n) + a ribonucleoside 5'-triphosphate = RNA(n+1) + diphosphate. Its function is as follows. DNA-dependent RNA polymerase catalyzes the transcription of DNA into RNA using the four ribonucleoside triphosphates as substrates. This Lotus japonicus (Lotus corniculatus var. japonicus) protein is DNA-directed RNA polymerase subunit beta'.